Reading from the N-terminus, the 183-residue chain is Small ribosomal subunit protein uS4 (183 aa).

Positions 106–168 constitute an S4 RNA-binding domain; the sequence is RRLETLVYKK…ETSPFTDENH (63 aa). The disordered stretch occupies residues 158-183; that stretch reads NETSPFTDENHPLRMEMSGTKEEENE. A compositionally biased stretch (basic and acidic residues) spans 165–183; sequence DENHPLRMEMSGTKEEENE.

This sequence belongs to the universal ribosomal protein uS4 family. In terms of assembly, part of the 30S ribosomal subunit. Contacts protein S5. The interaction surface between S4 and S5 is involved in control of translational fidelity.

Its function is as follows. One of the primary rRNA binding proteins, it binds directly to 16S rRNA where it nucleates assembly of the body of the 30S subunit. With S5 and S12 plays an important role in translational accuracy. The chain is Small ribosomal subunit protein uS4 from Picrophilus torridus (strain ATCC 700027 / DSM 9790 / JCM 10055 / NBRC 100828 / KAW 2/3).